The chain runs to 345 residues: Phosphoribosylformylglycinamidine cyclo-ligase (345 aa).

The protein belongs to the AIR synthase family.

It localises to the cytoplasm. It catalyses the reaction 2-formamido-N(1)-(5-O-phospho-beta-D-ribosyl)acetamidine + ATP = 5-amino-1-(5-phospho-beta-D-ribosyl)imidazole + ADP + phosphate + H(+). It functions in the pathway purine metabolism; IMP biosynthesis via de novo pathway; 5-amino-1-(5-phospho-D-ribosyl)imidazole from N(2)-formyl-N(1)-(5-phospho-D-ribosyl)glycinamide: step 2/2. The polypeptide is Phosphoribosylformylglycinamidine cyclo-ligase (Limosilactobacillus fermentum (strain NBRC 3956 / LMG 18251) (Lactobacillus fermentum)).